The chain runs to 398 residues: S-adenosylmethionine synthase (398 aa).

An ATP-binding site is contributed by His16. Asp18 provides a ligand contact to Mg(2+). Residue Glu44 participates in K(+) binding. Residues Glu57 and Gln100 each contribute to the L-methionine site. The flexible loop stretch occupies residues 100–110 (QSPDIAQGVNE). ATP-binding positions include 175–177 (DAK), 242–243 (RF), Asp251, 257–258 (RK), Ala274, and Lys278. Residue Asp251 participates in L-methionine binding. Lys282 contacts L-methionine.

This sequence belongs to the AdoMet synthase family. In terms of assembly, homotetramer; dimer of dimers. Requires Mg(2+) as cofactor. K(+) serves as cofactor.

It is found in the cytoplasm. It catalyses the reaction L-methionine + ATP + H2O = S-adenosyl-L-methionine + phosphate + diphosphate. Its pathway is amino-acid biosynthesis; S-adenosyl-L-methionine biosynthesis; S-adenosyl-L-methionine from L-methionine: step 1/1. In terms of biological role, catalyzes the formation of S-adenosylmethionine (AdoMet) from methionine and ATP. The overall synthetic reaction is composed of two sequential steps, AdoMet formation and the subsequent tripolyphosphate hydrolysis which occurs prior to release of AdoMet from the enzyme. The protein is S-adenosylmethionine synthase of Streptococcus agalactiae serotype III (strain NEM316).